Reading from the N-terminus, the 428-residue chain is 3-phosphoshikimate 1-carboxyvinyltransferase (428 aa).

3 residues coordinate 3-phosphoshikimate: Lys-23, Ser-24, and Arg-28. Lys-23 is a phosphoenolpyruvate binding site. Residues Gly-97 and Arg-125 each coordinate phosphoenolpyruvate. Ser-170, Ser-171, Gln-172, Ser-198, Asp-314, Asn-337, and Lys-341 together coordinate 3-phosphoshikimate. Gln-172 is a phosphoenolpyruvate binding site. Asp-314 functions as the Proton acceptor in the catalytic mechanism. Residues Arg-345, Arg-387, and Lys-412 each coordinate phosphoenolpyruvate.

This sequence belongs to the EPSP synthase family. In terms of assembly, monomer.

It is found in the cytoplasm. The catalysed reaction is 3-phosphoshikimate + phosphoenolpyruvate = 5-O-(1-carboxyvinyl)-3-phosphoshikimate + phosphate. It participates in metabolic intermediate biosynthesis; chorismate biosynthesis; chorismate from D-erythrose 4-phosphate and phosphoenolpyruvate: step 6/7. Its function is as follows. Catalyzes the transfer of the enolpyruvyl moiety of phosphoenolpyruvate (PEP) to the 5-hydroxyl of shikimate-3-phosphate (S3P) to produce enolpyruvyl shikimate-3-phosphate and inorganic phosphate. The protein is 3-phosphoshikimate 1-carboxyvinyltransferase of Erwinia tasmaniensis (strain DSM 17950 / CFBP 7177 / CIP 109463 / NCPPB 4357 / Et1/99).